The following is a 336-amino-acid chain: Anthranilate phosphoribosyltransferase (336 aa).

Residues Gly80, 83–84 (GD), Thr88, 90–93 (NIST), 108–116 (KHGNRSITS), and Ser120 each bind 5-phospho-alpha-D-ribose 1-diphosphate. Position 80 (Gly80) interacts with anthranilate. Ser92 serves as a coordination point for Mg(2+). Asn111 contacts anthranilate. Arg166 lines the anthranilate pocket. Positions 224 and 225 each coordinate Mg(2+).

The protein belongs to the anthranilate phosphoribosyltransferase family. As to quaternary structure, homodimer. The cofactor is Mg(2+).

The enzyme catalyses N-(5-phospho-beta-D-ribosyl)anthranilate + diphosphate = 5-phospho-alpha-D-ribose 1-diphosphate + anthranilate. The protein operates within amino-acid biosynthesis; L-tryptophan biosynthesis; L-tryptophan from chorismate: step 2/5. Its function is as follows. Catalyzes the transfer of the phosphoribosyl group of 5-phosphorylribose-1-pyrophosphate (PRPP) to anthranilate to yield N-(5'-phosphoribosyl)-anthranilate (PRA). This chain is Anthranilate phosphoribosyltransferase, found in Caldicellulosiruptor saccharolyticus (strain ATCC 43494 / DSM 8903 / Tp8T 6331).